A 292-amino-acid chain; its full sequence is 4-diphosphocytidyl-2-C-methyl-D-erythritol kinase (292 aa).

The active site involves K20. 103-113 provides a ligand contact to ATP; it reads PMGGGIGGGSS. D145 is a catalytic residue.

It belongs to the GHMP kinase family. IspE subfamily.

The enzyme catalyses 4-CDP-2-C-methyl-D-erythritol + ATP = 4-CDP-2-C-methyl-D-erythritol 2-phosphate + ADP + H(+). Its pathway is isoprenoid biosynthesis; isopentenyl diphosphate biosynthesis via DXP pathway; isopentenyl diphosphate from 1-deoxy-D-xylulose 5-phosphate: step 3/6. Catalyzes the phosphorylation of the position 2 hydroxy group of 4-diphosphocytidyl-2C-methyl-D-erythritol. The protein is 4-diphosphocytidyl-2-C-methyl-D-erythritol kinase of Cupriavidus taiwanensis (strain DSM 17343 / BCRC 17206 / CCUG 44338 / CIP 107171 / LMG 19424 / R1) (Ralstonia taiwanensis (strain LMG 19424)).